The primary structure comprises 371 residues: Transcription termination/antitermination protein NusA (371 aa).

Residues 135-199 (EDIMTGIVQR…KGPQIYVSRT (65 aa)) form the S1 motif domain. In terms of domain architecture, KH spans 301–367 (EKATTVIVPD…EPLFTEPETA (67 aa)). The segment at 347 to 371 (GIYPRELEEDDEPLFTEPETAESDE) is disordered. Acidic residues predominate over residues 353–371 (LEEDDEPLFTEPETAESDE).

It belongs to the NusA family. As to quaternary structure, monomer. Binds directly to the core enzyme of the DNA-dependent RNA polymerase and to nascent RNA.

The protein localises to the cytoplasm. In terms of biological role, participates in both transcription termination and antitermination. This Bacillus subtilis (strain 168) protein is Transcription termination/antitermination protein NusA.